We begin with the raw amino-acid sequence, 567 residues long: Cytochrome P450 monooxygenase 69 (567 aa).

The helical transmembrane segment at 7–24 threads the bilayer; sequence ELAALTVVLLATGVLFYA. Residues asparagine 25, asparagine 81, asparagine 223, and asparagine 279 are each glycosylated (N-linked (GlcNAc...) asparagine). Heme is bound at residue cysteine 475.

The protein belongs to the cytochrome P450 family. Requires heme as cofactor.

The protein resides in the membrane. It participates in secondary metabolite biosynthesis. In terms of biological role, cytochrome P450 monooxygenase that is able to use 4-ethoxybenzoic acid as a substrate for oxidation. The chain is Cytochrome P450 monooxygenase 69 from Postia placenta (strain ATCC 44394 / Madison 698-R) (Brown rot fungus).